We begin with the raw amino-acid sequence, 447 residues long: MRKLFGTDGVRGKANMHPMTAEMALRIGAAVGRYFRRENDTVHRVVIGKDTRLSGYMFENALTAGLTSTGMNVLLLGPVPTPAVGLMTRSMRADLGVMISASHNPAEDNGIKFFGPDGYKLSDEVELELEALIEAGVEPAQAQNIGRAKRIDDARFRYGERVKSSLPRDMRLDGLKVVIDCANGAAHRAAPEILWELGADVIPVGVSPDGLNINRGCGSTQPAAAAETVVAHGADVGICLDGDADRVVVIDETGTVADGDQLMALLASAWSADGRLSGGALVATVMSNLGLERFLNERGIGLERTGVGDRYVVERMRQGGFNLGGEQSGHIVMSDYATTGDGLMAGLHFLAEMVRRGQKASELARQFEPVPQLLKNVRFEAGQAPLEADQVQTAIAEAEKQLNGRGRLLIRKSGTEPLIRVMAESEDPVLLNRAVDDVVAAVEAATQ.

S102 serves as the catalytic Phosphoserine intermediate. S102, D241, D243, and D245 together coordinate Mg(2+). Residue S102 is modified to Phosphoserine.

Belongs to the phosphohexose mutase family. Requires Mg(2+) as cofactor. In terms of processing, activated by phosphorylation.

The catalysed reaction is alpha-D-glucosamine 1-phosphate = D-glucosamine 6-phosphate. Functionally, catalyzes the conversion of glucosamine-6-phosphate to glucosamine-1-phosphate. The protein is Phosphoglucosamine mutase of Ruegeria sp. (strain TM1040) (Silicibacter sp.).